The sequence spans 432 residues: Glutamyl-tRNA reductase (432 aa).

Substrate contacts are provided by residues 50–53 (TCNR), Ser110, 115–117 (ETQ), and Gln121. Cys51 (nucleophile) is an active-site residue. 190–195 (GAGEMG) is a binding site for NADP(+).

The protein belongs to the glutamyl-tRNA reductase family. Homodimer.

It catalyses the reaction (S)-4-amino-5-oxopentanoate + tRNA(Glu) + NADP(+) = L-glutamyl-tRNA(Glu) + NADPH + H(+). Its pathway is porphyrin-containing compound metabolism; protoporphyrin-IX biosynthesis; 5-aminolevulinate from L-glutamyl-tRNA(Glu): step 1/2. Functionally, catalyzes the NADPH-dependent reduction of glutamyl-tRNA(Glu) to glutamate 1-semialdehyde (GSA). This Nitratiruptor sp. (strain SB155-2) protein is Glutamyl-tRNA reductase.